A 289-amino-acid chain; its full sequence is 4-diphosphocytidyl-2-C-methyl-D-erythritol kinase (289 aa).

The active site involves Lys11. Residue 93 to 103 (PLAAGLAGGSA) participates in ATP binding. Asp135 is an active-site residue.

The protein belongs to the GHMP kinase family. IspE subfamily.

The enzyme catalyses 4-CDP-2-C-methyl-D-erythritol + ATP = 4-CDP-2-C-methyl-D-erythritol 2-phosphate + ADP + H(+). It functions in the pathway isoprenoid biosynthesis; isopentenyl diphosphate biosynthesis via DXP pathway; isopentenyl diphosphate from 1-deoxy-D-xylulose 5-phosphate: step 3/6. In terms of biological role, catalyzes the phosphorylation of the position 2 hydroxy group of 4-diphosphocytidyl-2C-methyl-D-erythritol. The sequence is that of 4-diphosphocytidyl-2-C-methyl-D-erythritol kinase from Thermoanaerobacter sp. (strain X514).